A 396-amino-acid chain; its full sequence is Phosphoglycerate kinase (396 aa).

Residues 21 to 23 (DLN), R36, 59 to 62 (HLGR), R113, and R146 contribute to the substrate site. ATP contacts are provided by residues K197, E319, and 345-348 (GGDT).

Belongs to the phosphoglycerate kinase family. As to quaternary structure, monomer.

The protein localises to the cytoplasm. It catalyses the reaction (2R)-3-phosphoglycerate + ATP = (2R)-3-phospho-glyceroyl phosphate + ADP. The protein operates within carbohydrate degradation; glycolysis; pyruvate from D-glyceraldehyde 3-phosphate: step 2/5. The sequence is that of Phosphoglycerate kinase from Legionella pneumophila (strain Paris).